A 188-amino-acid polypeptide reads, in one-letter code: Elongation factor P (188 aa).

It belongs to the elongation factor P family.

It localises to the cytoplasm. It functions in the pathway protein biosynthesis; polypeptide chain elongation. Its function is as follows. Involved in peptide bond synthesis. Stimulates efficient translation and peptide-bond synthesis on native or reconstituted 70S ribosomes in vitro. Probably functions indirectly by altering the affinity of the ribosome for aminoacyl-tRNA, thus increasing their reactivity as acceptors for peptidyl transferase. This Mycoplasma mobile (strain ATCC 43663 / 163K / NCTC 11711) (Mesomycoplasma mobile) protein is Elongation factor P.